We begin with the raw amino-acid sequence, 174 residues long: CASP-like protein 4D2 (174 aa).

At 1–14 the chain is on the cytoplasmic side; the sequence is MAPPPPSPPPVSLK. A helical membrane pass occupies residues 15–35; that stretch reads VSLLLLRVLTGVFLVIALIIL. The Extracellular portion of the chain corresponds to 36-60; sequence STNSVTIVSQGSALKFHFKDVYAYR. A helical transmembrane segment spans residues 61–81; that stretch reads YMLSAAVIGLLYAVIQLFFTI. The Cytoplasmic segment spans residues 82 to 150; that stretch reads SEFATGMKNP…FFSRGYASAS (69 aa). Residues 151 to 171 form a helical membrane-spanning segment; sequence LLLFSFICLAVLSVFSSLAIA. Topologically, residues 172-174 are extracellular; the sequence is KRN.

It belongs to the Casparian strip membrane proteins (CASP) family. As to quaternary structure, homodimer and heterodimers.

It localises to the cell membrane. This is CASP-like protein 4D2 from Arabidopsis lyrata subsp. lyrata (Lyre-leaved rock-cress).